A 66-amino-acid chain; its full sequence is Large ribosomal subunit protein bL31 (66 aa).

Residues Cys-16, Cys-18, Cys-36, and Cys-39 each coordinate Zn(2+).

This sequence belongs to the bacterial ribosomal protein bL31 family. Type A subfamily. Part of the 50S ribosomal subunit. The cofactor is Zn(2+).

Its function is as follows. Binds the 23S rRNA. The chain is Large ribosomal subunit protein bL31 from Nautilia profundicola (strain ATCC BAA-1463 / DSM 18972 / AmH).